The chain runs to 392 residues: Succinate--CoA ligase [ADP-forming] subunit beta (392 aa).

The ATP-grasp domain maps to 9–248; that stretch reads KDILRKFGVA…TNEEDPFEVE (240 aa). ATP contacts are provided by residues lysine 50, 57–59, glutamate 103, methionine 106, and glutamate 111; that span reads GRG. Asparagine 203 and aspartate 217 together coordinate Mg(2+). Residues asparagine 268 and 325–327 contribute to the substrate site; that span reads GIV.

The protein belongs to the succinate/malate CoA ligase beta subunit family. As to quaternary structure, heterotetramer of two alpha and two beta subunits. Mg(2+) serves as cofactor.

It carries out the reaction succinate + ATP + CoA = succinyl-CoA + ADP + phosphate. The catalysed reaction is GTP + succinate + CoA = succinyl-CoA + GDP + phosphate. It participates in carbohydrate metabolism; tricarboxylic acid cycle; succinate from succinyl-CoA (ligase route): step 1/1. Its function is as follows. Succinyl-CoA synthetase functions in the citric acid cycle (TCA), coupling the hydrolysis of succinyl-CoA to the synthesis of either ATP or GTP and thus represents the only step of substrate-level phosphorylation in the TCA. The beta subunit provides nucleotide specificity of the enzyme and binds the substrate succinate, while the binding sites for coenzyme A and phosphate are found in the alpha subunit. The sequence is that of Succinate--CoA ligase [ADP-forming] subunit beta from Pelodictyon phaeoclathratiforme (strain DSM 5477 / BU-1).